The primary structure comprises 467 residues: Fumarate hydratase class II (467 aa).

Substrate is bound by residues 98–100, R126, 129–132, 139–141, and T187; these read SGT, HPND, and SSN. Residue H188 is the Proton donor/acceptor of the active site. S318 is an active-site residue. Residues S319 and 324–326 contribute to the substrate site; that span reads KVN.

The protein belongs to the class-II fumarase/aspartase family. Fumarase subfamily. Homotetramer.

The protein resides in the cytoplasm. It carries out the reaction (S)-malate = fumarate + H2O. Its pathway is carbohydrate metabolism; tricarboxylic acid cycle; (S)-malate from fumarate: step 1/1. Its activity is regulated as follows. Inhibited by ATP, citrate and S-2,3-dicarboxyaziridine. Its function is as follows. Involved in the TCA cycle. FumC seems to be a backup enzyme for FumA under conditions of iron limitation and oxidative stress. Catalyzes the stereospecific interconversion of fumarate to L-malate. The sequence is that of Fumarate hydratase class II from Escherichia coli (strain K12).